The following is a 471-amino-acid chain: Adenosylhomocysteinase (471 aa).

Substrate-binding residues include Thr58, Asp133, and Glu195. 196-198 (TTT) is an NAD(+) binding site. Residues Lys225 and Asp229 each contribute to the substrate site. NAD(+)-binding positions include Asn230, 259-264 (GFGDVG), Glu282, Asn317, 338-340 (IGH), and Asn383.

The protein belongs to the adenosylhomocysteinase family. It depends on NAD(+) as a cofactor.

It is found in the cytoplasm. It catalyses the reaction S-adenosyl-L-homocysteine + H2O = L-homocysteine + adenosine. The protein operates within amino-acid biosynthesis; L-homocysteine biosynthesis; L-homocysteine from S-adenosyl-L-homocysteine: step 1/1. Its function is as follows. May play a key role in the regulation of the intracellular concentration of adenosylhomocysteine. In Rhodopseudomonas palustris (strain BisB5), this protein is Adenosylhomocysteinase.